Reading from the N-terminus, the 354-residue chain is UDP-N-acetylglucosamine--N-acetylmuramyl-(pentapeptide) pyrophosphoryl-undecaprenol N-acetylglucosamine transferase (354 aa).

UDP-N-acetyl-alpha-D-glucosamine contacts are provided by residues 15 to 17 (TGG), asparagine 127, arginine 163, serine 191, isoleucine 244, 263 to 268 (ALTVSE), and glutamine 288.

The protein belongs to the glycosyltransferase 28 family. MurG subfamily.

The protein localises to the cell inner membrane. The enzyme catalyses di-trans,octa-cis-undecaprenyl diphospho-N-acetyl-alpha-D-muramoyl-L-alanyl-D-glutamyl-meso-2,6-diaminopimeloyl-D-alanyl-D-alanine + UDP-N-acetyl-alpha-D-glucosamine = di-trans,octa-cis-undecaprenyl diphospho-[N-acetyl-alpha-D-glucosaminyl-(1-&gt;4)]-N-acetyl-alpha-D-muramoyl-L-alanyl-D-glutamyl-meso-2,6-diaminopimeloyl-D-alanyl-D-alanine + UDP + H(+). It participates in cell wall biogenesis; peptidoglycan biosynthesis. Its function is as follows. Cell wall formation. Catalyzes the transfer of a GlcNAc subunit on undecaprenyl-pyrophosphoryl-MurNAc-pentapeptide (lipid intermediate I) to form undecaprenyl-pyrophosphoryl-MurNAc-(pentapeptide)GlcNAc (lipid intermediate II). The polypeptide is UDP-N-acetylglucosamine--N-acetylmuramyl-(pentapeptide) pyrophosphoryl-undecaprenol N-acetylglucosamine transferase (Aliivibrio fischeri (strain ATCC 700601 / ES114) (Vibrio fischeri)).